Here is a 160-residue protein sequence, read N- to C-terminus: Arsenate reductase 2.1 (160 aa).

The 102-residue stretch at 42 to 143 folds into the Rhodanese domain; the sequence is SNPRVAIIDV…WELSGQPVCR (102 aa). Cysteine 94 acts as the Cysteine persulfide intermediate in catalysis.

The catalysed reaction is [glutaredoxin]-dithiol + arsenate + glutathione + H(+) = glutathionyl-S-S-[glutaredoxin] + arsenite + H2O. In terms of biological role, possesses arsenate reductase activity in vitro. Catalyzes the reduction of arsenate [As(V)] to arsenite [As(III)]. May play a role in arsenic retention in roots. Possesses phosphatase activity towards p-nitrophenyl phosphate in vitro. This chain is Arsenate reductase 2.1 (ACR2.1), found in Oryza sativa subsp. japonica (Rice).